The following is a 304-amino-acid chain: Acetylglutamate kinase (304 aa).

Substrate-binding positions include 75–76, Arg97, and Asn202; that span reads GG.

It belongs to the acetylglutamate kinase family. ArgB subfamily.

It localises to the cytoplasm. It catalyses the reaction N-acetyl-L-glutamate + ATP = N-acetyl-L-glutamyl 5-phosphate + ADP. The protein operates within amino-acid biosynthesis; L-arginine biosynthesis; N(2)-acetyl-L-ornithine from L-glutamate: step 2/4. Its function is as follows. Catalyzes the ATP-dependent phosphorylation of N-acetyl-L-glutamate. In Parvibaculum lavamentivorans (strain DS-1 / DSM 13023 / NCIMB 13966), this protein is Acetylglutamate kinase.